A 126-amino-acid chain; its full sequence is Holo-[acyl-carrier-protein] synthase (126 aa).

2 residues coordinate Mg(2+): Asp-9 and Glu-58.

This sequence belongs to the P-Pant transferase superfamily. AcpS family. Requires Mg(2+) as cofactor.

The protein resides in the cytoplasm. The enzyme catalyses apo-[ACP] + CoA = holo-[ACP] + adenosine 3',5'-bisphosphate + H(+). In terms of biological role, transfers the 4'-phosphopantetheine moiety from coenzyme A to a Ser of acyl-carrier-protein. This Cronobacter sakazakii (strain ATCC BAA-894) (Enterobacter sakazakii) protein is Holo-[acyl-carrier-protein] synthase.